Here is a 1392-residue protein sequence, read N- to C-terminus: DNA-directed RNA polymerase subunit beta'' (1392 aa).

The Zn(2+) site is built by C224, C295, C302, and C305.

It belongs to the RNA polymerase beta' chain family. RpoC2 subfamily. As to quaternary structure, in plastids the minimal PEP RNA polymerase catalytic core is composed of four subunits: alpha, beta, beta', and beta''. When a (nuclear-encoded) sigma factor is associated with the core the holoenzyme is formed, which can initiate transcription. It depends on Zn(2+) as a cofactor.

Its subcellular location is the plastid. The protein resides in the chloroplast. It catalyses the reaction RNA(n) + a ribonucleoside 5'-triphosphate = RNA(n+1) + diphosphate. Its function is as follows. DNA-dependent RNA polymerase catalyzes the transcription of DNA into RNA using the four ribonucleoside triphosphates as substrates. This Solanum lycopersicum (Tomato) protein is DNA-directed RNA polymerase subunit beta''.